Consider the following 551-residue polypeptide: Trigger factor (551 aa).

The PPIase FKBP-type domain occupies 165–250; the sequence is GDLVVLDFAG…ATDVRVPGET (86 aa). Residues 442 to 551 are disordered; sequence ADDDTIGKGH…APAKKKAAAE (110 aa). Basic and acidic residues predominate over residues 458–472; that stretch reads GHDHHDHDHDHDHAA. The span at 513–541 shows a compositional bias: low complexity; it reads EAAPAPKKAPAKKAAAAKAEEAPAAAPKK. Over residues 542-551 the composition is skewed to basic residues; it reads APAKKKAAAE.

Belongs to the FKBP-type PPIase family. Tig subfamily.

The protein localises to the cytoplasm. It catalyses the reaction [protein]-peptidylproline (omega=180) = [protein]-peptidylproline (omega=0). Functionally, involved in protein export. Acts as a chaperone by maintaining the newly synthesized protein in an open conformation. Functions as a peptidyl-prolyl cis-trans isomerase. This is Trigger factor from Rhizorhabdus wittichii (strain DSM 6014 / CCUG 31198 / JCM 15750 / NBRC 105917 / EY 4224 / RW1) (Sphingomonas wittichii).